We begin with the raw amino-acid sequence, 707 residues long: Terpene cyclase/mutase atnI (707 aa).

Residues 1 to 20 (MGQHIASSESSTNGHVSLET) are compositionally biased toward polar residues. The interval 1 to 22 (MGQHIASSESSTNGHVSLETNG) is disordered. 4 PFTB repeats span residues 130 to 173 (AVEI…RLLG), 494 to 535 (LRDA…VGKT), 571 to 608 (TAQG…ETLA), and 620 to 661 (SRRG…VQTA).

It belongs to the terpene cyclase/mutase family.

Its pathway is secondary metabolite biosynthesis; terpenoid biosynthesis. Terpene cyclase/mutase; part of the gene cluster that mediates the biosynthesis of the meroterpenoids arthripenoids. The pathway begins with the HR-PKS atnH that catalyzes two chain-extension steps to form a reduced triketide, which then primes the SAT domain in the NR-PKS atnG to initiate three more cycles of extension to give a linear hexaketide corresponding to the polyketide part of arthripenoids. The FAD-dependent monooxygenase atnJ then performs an oxidative decarboxylation at C11 of the atnH/atnG product, via an electrophilic aromatic hydroxylation with concomitant ipso-decarboxylation. The membrane-bound polyprenyl transferase atnF then introduces a farnesyl group before the FAD-dependent monooxygenase atnK functions as the first epoxidase on terminal C12'-C13' olefin, followed by a second epoxidation on C7'-C8' catalyzed by atnA. The terpene cyclase/mutase atnI then initiates the sequential tricyclic ring formation through protonation of the terminal epoxide and catalyzes the regioselective and stereoselective 6/6/6-tricyclic ring formation. The cytochrome P450 monooxygenase atnM is responsible for hydroxylating both C1' and C10'. The next steps may involve ketoreduction and acetyl transfer by the ketoreductase atnB and the acetyltransferase atnC, and lead to the production of arthripenoid B, the final biosynthetic product of the atn cluster. The hydroquinone moiety in arthripenoid B is prone to undergo spontaneous oxidation to afford a benzoquinone compound, a key intermediate for generating structure diversity. For instance, addition of a cysteine followed by ring contraction gives arthripenoid A, tautomerization gives the main product arthripenoid C, addition of a molecular of water or amine affords arthripenoid D or E, respectively, and loss of one water forms arthripenoid F. This chain is Terpene cyclase/mutase atnI, found in Arthrinium sp.